Here is a 652-residue protein sequence, read N- to C-terminus: Meiotic sister-chromatid recombination protein 3 (652 aa).

Disordered stretches follow at residues 123–151 (RTGT…SRTG), 304–406 (NNSK…SDQK), 470–576 (EQIQ…ESGA), and 594–652 (ATPV…INTK). A compositionally biased stretch (polar residues) spans 125-141 (GTASSRGVGSRTGSMTG). Residues 316 to 336 (VQKQGVQQQQEVQHQGISQVQ) show a composition bias toward low complexity. The segment covering 337–361 (NTEAKSVGRKSTMSKRMTLRDTPNA) has biased composition (polar residues). Residues 380–390 (TKRKSIFKSKK) show a composition bias toward basic residues. Polar residues-rich tracts occupy residues 506-517 (QFSQENSGNQPP) and 524-544 (QYSQ…NFDT). Residues 545–569 (NASGHNINHNNNNHNNNNNTSSSSS) show a composition bias toward low complexity. Polar residues predominate over residues 612–621 (SSPSIDNTPR). The span at 640-652 (RLFKSNKTHINTK) shows a compositional bias: basic residues.

Its subcellular location is the cell membrane. May be involved in the control of meiotic sister-chromatid recombination. The protein is Meiotic sister-chromatid recombination protein 3 (MSC3) of Kluyveromyces lactis (strain ATCC 8585 / CBS 2359 / DSM 70799 / NBRC 1267 / NRRL Y-1140 / WM37) (Yeast).